Here is a 115-residue protein sequence, read N- to C-terminus: Peptidyl-tRNA hydrolase (115 aa).

It belongs to the PTH2 family.

The protein resides in the cytoplasm. The enzyme catalyses an N-acyl-L-alpha-aminoacyl-tRNA + H2O = an N-acyl-L-amino acid + a tRNA + H(+). Its function is as follows. The natural substrate for this enzyme may be peptidyl-tRNAs which drop off the ribosome during protein synthesis. In Archaeoglobus fulgidus (strain ATCC 49558 / DSM 4304 / JCM 9628 / NBRC 100126 / VC-16), this protein is Peptidyl-tRNA hydrolase.